Consider the following 469-residue polypeptide: 3-isopropylmalate dehydratase large subunit (469 aa).

C347, C410, and C413 together coordinate [4Fe-4S] cluster.

The protein belongs to the aconitase/IPM isomerase family. LeuC type 1 subfamily. In terms of assembly, heterodimer of LeuC and LeuD. [4Fe-4S] cluster serves as cofactor.

The enzyme catalyses (2R,3S)-3-isopropylmalate = (2S)-2-isopropylmalate. It participates in amino-acid biosynthesis; L-leucine biosynthesis; L-leucine from 3-methyl-2-oxobutanoate: step 2/4. Catalyzes the isomerization between 2-isopropylmalate and 3-isopropylmalate, via the formation of 2-isopropylmaleate. The polypeptide is 3-isopropylmalate dehydratase large subunit (Burkholderia mallei (strain NCTC 10247)).